The primary structure comprises 514 residues: 2,3-bisphosphoglycerate-independent phosphoglycerate mutase (514 aa).

Residues aspartate 14 and serine 64 each contribute to the Mn(2+) site. The active-site Phosphoserine intermediate is the serine 64. Residues histidine 125, arginine 155 to aspartate 156, arginine 187, arginine 193, arginine 263 to arginine 266, and lysine 336 each bind substrate. Residues aspartate 403, histidine 407, aspartate 444, histidine 445, and histidine 463 each contribute to the Mn(2+) site.

The protein belongs to the BPG-independent phosphoglycerate mutase family. In terms of assembly, monomer. It depends on Mn(2+) as a cofactor.

It carries out the reaction (2R)-2-phosphoglycerate = (2R)-3-phosphoglycerate. It functions in the pathway carbohydrate degradation; glycolysis; pyruvate from D-glyceraldehyde 3-phosphate: step 3/5. Its function is as follows. Catalyzes the interconversion of 2-phosphoglycerate and 3-phosphoglycerate. The chain is 2,3-bisphosphoglycerate-independent phosphoglycerate mutase from Shewanella sp. (strain MR-7).